We begin with the raw amino-acid sequence, 180 residues long: Translation initiation factor IF-3 (180 aa).

This sequence belongs to the IF-3 family. In terms of assembly, monomer.

The protein localises to the cytoplasm. Its function is as follows. IF-3 binds to the 30S ribosomal subunit and shifts the equilibrium between 70S ribosomes and their 50S and 30S subunits in favor of the free subunits, thus enhancing the availability of 30S subunits on which protein synthesis initiation begins. The chain is Translation initiation factor IF-3 from Xylella fastidiosa (strain Temecula1 / ATCC 700964).